The sequence spans 523 residues: Glycerate kinase (523 aa).

The residue at position 60 (Ser-60) is a Phosphoserine. Lys-200 is modified (N6-acetyllysine).

Belongs to the glycerate kinase type-2 family. Expressed in the hippocampus, callus, brain, cerebellum, renal cortex interstitial cells, epithelium of interlobular bile duct and skeletal muscle.

It localises to the cytoplasm. It catalyses the reaction (R)-glycerate + ATP = (2R)-3-phosphoglycerate + ADP + H(+). The chain is Glycerate kinase (Glyctk) from Mus musculus (Mouse).